The following is an 872-amino-acid chain: Telomerase component p95 (872 aa).

2 disordered regions span residues 55-75 and 471-492; these read NQDQDGNSGNDDDDEENNSNK and KNNKNQEETPETKDETPSESTS. Residues 474 to 486 show a composition bias toward basic and acidic residues; sequence KNQEETPETKDET.

As to quaternary structure, telomerase consist of two subunit, p80 and p95 that form a 1:1:1 complex with the 159 nt telomerase RNA.

The protein resides in the nucleus. It localises to the chromosome. The protein localises to the telomere. The catalysed reaction is DNA(n) + a 2'-deoxyribonucleoside 5'-triphosphate = DNA(n+1) + diphosphate. In terms of biological role, ribonucleoprotein DNA polymerase that catalyzes the de novo synthesis of telomeric simple sequence repeats. Subunit p95 contains some or all of the template-independent primer DNA-binding site termed the anchor site. The sequence is that of Telomerase component p95 from Tetrahymena thermophila.